Reading from the N-terminus, the 544-residue chain is Apolipoprotein N-acyltransferase 1 (544 aa).

Transmembrane regions (helical) follow at residues 30–50 (LNLN…FLLL), 57–79 (FSFL…WIIF), 91–111 (KYCI…SYFS), 115–135 (FIFQ…GFLG), 157–177 (IFGV…SASF), and 197–217 (PMMI…FTKI). In terms of domain architecture, CN hydrolase spans 225–501 (ARIALVQPNR…KDILVADVTV (277 aa)). Glu272 functions as the Proton acceptor in the catalytic mechanism. Residue Lys360 is part of the active site. Catalysis depends on Cys412, which acts as the Nucleophile. The chain crosses the membrane as a helical span at residues 514-534 (GDFFGVLCTIVLILNLCFIII).

Belongs to the CN hydrolase family. Apolipoprotein N-acyltransferase subfamily.

The protein localises to the cell inner membrane. The catalysed reaction is N-terminal S-1,2-diacyl-sn-glyceryl-L-cysteinyl-[lipoprotein] + a glycerophospholipid = N-acyl-S-1,2-diacyl-sn-glyceryl-L-cysteinyl-[lipoprotein] + a 2-acyl-sn-glycero-3-phospholipid + H(+). Its pathway is protein modification; lipoprotein biosynthesis (N-acyl transfer). Its function is as follows. Catalyzes the phospholipid dependent N-acylation of the N-terminal cysteine of apolipoprotein, the last step in lipoprotein maturation. This is Apolipoprotein N-acyltransferase 1 from Treponema denticola (strain ATCC 35405 / DSM 14222 / CIP 103919 / JCM 8153 / KCTC 15104).